A 439-amino-acid polypeptide reads, in one-letter code: Probable serine/threonine-protein kinase WNK6 (439 aa).

Positions 1 to 30 (MMPPKPAAEDVADEQPEPPDEDPDVAEADP) are disordered. Residues 10–27 (DVADEQPEPPDEDPDVAE) are compositionally biased toward acidic residues. The Protein kinase domain occupies 35–293 (LRYREIIGSG…ASELLKSPFL (259 aa)). ATP is bound by residues 116 to 119 (TELF) and lysine 166. Aspartate 183 serves as the catalytic Proton acceptor.

Belongs to the protein kinase superfamily. Ser/Thr protein kinase family. WNK subfamily.

It carries out the reaction L-seryl-[protein] + ATP = O-phospho-L-seryl-[protein] + ADP + H(+). It catalyses the reaction L-threonyl-[protein] + ATP = O-phospho-L-threonyl-[protein] + ADP + H(+). This is Probable serine/threonine-protein kinase WNK6 (WNK6) from Oryza sativa subsp. japonica (Rice).